Reading from the N-terminus, the 205-residue chain is GTP cyclohydrolase 1 (205 aa).

Zn(2+) is bound by residues cysteine 94, histidine 97, and cysteine 165.

Belongs to the GTP cyclohydrolase I family. Toroid-shaped homodecamer, composed of two pentamers of five dimers.

The enzyme catalyses GTP + H2O = 7,8-dihydroneopterin 3'-triphosphate + formate + H(+). It functions in the pathway cofactor biosynthesis; 7,8-dihydroneopterin triphosphate biosynthesis; 7,8-dihydroneopterin triphosphate from GTP: step 1/1. This is GTP cyclohydrolase 1 from Sinorhizobium medicae (strain WSM419) (Ensifer medicae).